Reading from the N-terminus, the 146-residue chain is Neuropeptide Y receptor type 2 (146 aa).

The Extracellular portion of the chain corresponds to 1–8 (KMGPVLCH). Residues C7 and C87 are joined by a disulfide bond. Residues 9 to 29 (LVPYAQGLAVQVSTITLTVIA) traverse the membrane as a helical segment. The Cytoplasmic segment spans residues 30-49 (LDRHRCIVYHLESKISKQIS). The helical transmembrane segment at 50-70 (FLIIGLAWGVSALLASPLAIF) threads the bilayer. Over 71–100 (REYSLIEIIPDFEIVACTEKWPGEEKGIYG) the chain is Extracellular. Residues 101 to 121 (TVYSLLSLLILYVLPLGIISF) traverse the membrane as a helical segment. Residues 122 to 146 (SYARIWSKLKNHVSPGAAHDHYHQR) are Cytoplasmic-facing.

The protein belongs to the G-protein coupled receptor 1 family.

The protein localises to the cell membrane. In terms of biological role, receptor for neuropeptide Y and peptide YY. The sequence is that of Neuropeptide Y receptor type 2 (NPY2R) from Ovis aries (Sheep).